We begin with the raw amino-acid sequence, 89 residues long: 10 kDa fusion protein (89 aa).

Residues 1–29 are disordered; sequence MDENDGENLLTQPDDTGNSTNGVYAAGAP. Over residues 9–22 the composition is skewed to polar residues; sequence LLTQPDDTGNSTNG. N-linked (GlcNAc...) asparagine; by host glycosylation is present at asparagine 18.

This sequence belongs to the poxviruses fusion protein family. As to quaternary structure, homotrimer, covalently linked.

Its subcellular location is the virion membrane. This chain is 10 kDa fusion protein, found in Capra hircus (Goat).